A 365-amino-acid polypeptide reads, in one-letter code: tRNA N6-adenosine threonylcarbamoyltransferase (365 aa).

Residues H119 and H123 each contribute to the Fe cation site. Residues 141-145 (LVSGG), D174, G187, and N289 each bind substrate. Fe cation is bound at residue D317. Residues 342–365 (ARPRWPLDSKSPAMLGSGKKGAKA) form a disordered region.

This sequence belongs to the KAE1 / TsaD family. It depends on Fe(2+) as a cofactor.

The protein localises to the cytoplasm. The catalysed reaction is L-threonylcarbamoyladenylate + adenosine(37) in tRNA = N(6)-L-threonylcarbamoyladenosine(37) in tRNA + AMP + H(+). Required for the formation of a threonylcarbamoyl group on adenosine at position 37 (t(6)A37) in tRNAs that read codons beginning with adenine. Is involved in the transfer of the threonylcarbamoyl moiety of threonylcarbamoyl-AMP (TC-AMP) to the N6 group of A37, together with TsaE and TsaB. TsaD likely plays a direct catalytic role in this reaction. The polypeptide is tRNA N6-adenosine threonylcarbamoyltransferase (Roseobacter denitrificans (strain ATCC 33942 / OCh 114) (Erythrobacter sp. (strain OCh 114))).